Consider the following 77-residue polypeptide: NADH-ubiquinone oxidoreductase chain 4L (77 aa).

2 consecutive transmembrane segments (helical) span residues 15–37 (WQRLIFILISLEFMMLSLFLKFS) and 44–64 (MFFYFMCFSVISSILGMVVMV).

The protein belongs to the complex I subunit 4L family.

The protein localises to the mitochondrion membrane. The enzyme catalyses a ubiquinone + NADH + 5 H(+)(in) = a ubiquinol + NAD(+) + 4 H(+)(out). Its function is as follows. Core subunit of the mitochondrial membrane respiratory chain NADH dehydrogenase (Complex I) that is believed to belong to the minimal assembly required for catalysis. Complex I functions in the transfer of electrons from NADH to the respiratory chain. The immediate electron acceptor for the enzyme is believed to be ubiquinone. In Caenorhabditis elegans, this protein is NADH-ubiquinone oxidoreductase chain 4L.